Consider the following 291-residue polypeptide: Protein SpdB (291 aa).

3 helical membrane-spanning segments follow: residues Val24 to Gly44, Ile71 to Leu91, and Trp99 to Trp119.

It is found in the cell membrane. Involved in plasmid transfer. The polypeptide is Protein SpdB (spdB) (Streptomyces lividans).